Here is a 155-residue protein sequence, read N- to C-terminus: Aspartate carbamoyltransferase regulatory chain (155 aa).

The Zn(2+) site is built by C110, C115, C139, and C142.

This sequence belongs to the PyrI family. Contains catalytic and regulatory chains. Requires Zn(2+) as cofactor.

Its function is as follows. Involved in allosteric regulation of aspartate carbamoyltransferase. The protein is Aspartate carbamoyltransferase regulatory chain of Yersinia pestis bv. Antiqua (strain Antiqua).